We begin with the raw amino-acid sequence, 226 residues long: Cobalt transport protein CbiM 2 (226 aa).

A run of 6 helical transmembrane segments spans residues 6 to 26 (GFLPVEHAIGWSVASAPVVAY), 43 to 63 (MLLGVAAAFTFVLSALKMPSV), 75 to 95 (LGAILFGPSAVAPIGAVVLLF), 107 to 127 (TLGANIFSMAIVGPFAAAAVF), 135 to 155 (FPFGVGVFLAASLGDLLTYVT), and 181 to 201 (VFALTQIPLAISEGLLTVVVM).

The protein belongs to the CbiM family. In terms of assembly, forms an energy-coupling factor (ECF) transporter complex composed of an ATP-binding protein (A component, CbiO), a transmembrane protein (T component, CbiQ) and 2 possible substrate-capture proteins (S components, CbiM and CbiN) of unknown stoichimetry.

It localises to the cell inner membrane. The protein operates within cofactor biosynthesis; adenosylcobalamin biosynthesis. Functionally, part of the energy-coupling factor (ECF) transporter complex CbiMNOQ involved in cobalt import. The chain is Cobalt transport protein CbiM 2 from Pelobacter propionicus (strain DSM 2379 / NBRC 103807 / OttBd1).